The primary structure comprises 912 residues: Transferrin-binding protein A (912 aa).

Positions Met1 to Ala23 are cleaved as a signal peptide. The TonB box motif lies at Glu50 to Glu57. Residues Lys63–Lys188 enclose the TBDR plug domain. A TBDR beta-barrel domain is found at Ser199 to Phe912. A TonB C-terminal box motif is present at residues Thr895–Phe912.

The protein belongs to the TonB-dependent receptor family.

It localises to the cell outer membrane. Functionally, haemophilus acquires iron by extracting it from serum transferrin (TF) in its human host. Acts as a transferrin receptor and is required for transferrin utilization. In Haemophilus influenzae (strain ATCC 51907 / DSM 11121 / KW20 / Rd), this protein is Transferrin-binding protein A.